A 923-amino-acid chain; its full sequence is TBC1 domain family member 2A (923 aa).

M1 carries the N-acetylmethionine modification. Positions 1–39 (MDGAHENAAESSSSVPRSEEPACSAGGPEVLPPEESEGC) are disordered. An interaction with CADH1 region spans residues 1–171 (MDGAHENAAE…AGNGPTLRLE (171 aa)). The 98-residue stretch at 47 to 144 (PKKLCGYLSK…WLQQLQTKRW (98 aa)) folds into the PH domain. Disordered stretches follow at residues 146-166 (FHSSPPAPPAAPDAAPAGNGP) and 232-289 (RQAQ…LIQK). The interaction with RAC1 stretch occupies residues 301–439 (AEGLTRTRTA…KVTWDFTHPP (139 aa)). A coiled-coil region spans residues 308–486 (RTAQEKILAL…LNSEIHQVTK (179 aa)). Residues 631 to 823 (GVPREHRPRV…RVWDAFLYEG (193 aa)) enclose the Rab-GAP TBC domain. The stretch at 870 to 904 (MKQLRQLRRAHRERLEAELHELEQLKAEYLETQSS) forms a coiled coil. The tract at residues 900–923 (ETQSSRGPAVPDGCTSEDEGEGEA) is disordered. The segment covering 914 to 923 (TSEDEGEGEA) has biased composition (acidic residues). S915 is modified (phosphoserine).

Interacts with activated RAC1 and CDH1.

It is found in the cytoplasm. The protein localises to the cytoplasmic vesicle. It localises to the cell junction. In terms of biological role, acts as a GTPase-activating protein for RAB7A. Signal effector acting as a linker between RAC1 and RAB7A, leading to RAB7A inactivation and subsequent inhibition of cadherin degradation and reduced cell-cell adhesion. This is TBC1 domain family member 2A (TBC1D2) from Ailuropoda melanoleuca (Giant panda).